The sequence spans 556 residues: MNSILAIKNIVIESLSQAMEKARQEGQIPALSVDISIEHPQKTNYGDYATSLPLRLAKATGKRPMELAQILASYIETGSGISKVSVAPPGFINFTFSKEWLCSLVKTILTEAGSYGNINMGGGSRVQIEFVSANPTGPIHIGHGRGAVLGSTLSNILKAAGYYVEEEFYINDAGSQIDAFKRTLFARYQQALGKDAAVPQDGYHGQYMVDLAAEMVTKYGDKYLQMPADIAQNDLGEIGMARMLCLISDDLKALKVDFDIWFSERSLYSGGQYKTAMDILSGNNYIAERDNATWFSSTLLGDSKDNVIVRSDGTPTYFASDIAYHYNKFIERKFDRVINIWGADHQGHVSRMKAMVSALGINPERLTTLLFQMITLKRGGELVRLSKRTGEIISLREVIEEVGADACRFFFLARSTESQMDFDLELAKKESAENPVYYVQYAHARICSILHLAEEKQLDYSTGDTALLGEEAELELIRKMAELPEIVETVSRTLEPHHLTYYAQELANAFHQFYKDCRVISDNAELTCARLKLVDASRIVLARTLHLMGMTSPESM.

Residues 133 to 143 (ANPTGPIHIGH) carry the 'HIGH' region motif.

The protein belongs to the class-I aminoacyl-tRNA synthetase family. As to quaternary structure, monomer.

It localises to the cytoplasm. It catalyses the reaction tRNA(Arg) + L-arginine + ATP = L-arginyl-tRNA(Arg) + AMP + diphosphate. This is Arginine--tRNA ligase from Dehalococcoides mccartyi (strain ATCC BAA-2100 / JCM 16839 / KCTC 5957 / BAV1).